The sequence spans 113 residues: Large ribosomal subunit protein bL17 (113 aa).

It belongs to the bacterial ribosomal protein bL17 family. In terms of assembly, part of the 50S ribosomal subunit. Contacts protein L32.

This is Large ribosomal subunit protein bL17 from Caldicellulosiruptor bescii (strain ATCC BAA-1888 / DSM 6725 / KCTC 15123 / Z-1320) (Anaerocellum thermophilum).